The sequence spans 338 residues: 1-aminocyclopropane-1-carboxylate deaminase (338 aa).

The residue at position 51 (lysine 51) is an N6-(pyridoxal phosphate)lysine. Catalysis depends on serine 78, which acts as the Nucleophile.

It belongs to the ACC deaminase/D-cysteine desulfhydrase family. Homotrimer. Pyridoxal 5'-phosphate serves as cofactor.

It catalyses the reaction 1-aminocyclopropane-1-carboxylate + H2O = 2-oxobutanoate + NH4(+). Functionally, catalyzes a cyclopropane ring-opening reaction, the irreversible conversion of 1-aminocyclopropane-1-carboxylate (ACC) to ammonia and alpha-ketobutyrate. Allows growth on ACC as a nitrogen source. The polypeptide is 1-aminocyclopropane-1-carboxylate deaminase (Variovorax paradoxus (strain S110)).